A 306-amino-acid chain; its full sequence is Glutathione transport system permease protein GsiC (306 aa).

Topologically, residues 1 to 8 (MLNYVIKR) are cytoplasmic. A helical membrane pass occupies residues 9 to 29 (LLGLIPTLFIVSVLVFLFVHM). Residues 30-102 (LPGDPARLIA…SRFMPTLWLT (73 aa)) lie on the Periplasmic side of the membrane. Residues 95-292 (FMPTLWLTIT…LEFILINLVV (198 aa)) form the ABC transmembrane type-1 domain. A helical transmembrane segment spans residues 103-123 (ITSMVWAVIFGMAAGIIAAVW). Over 124–134 (RNRWPDRLSMT) the chain is Cytoplasmic. Residues 135-155 (IAVSGISFPAFALGMLLIQVF) traverse the membrane as a helical segment. At 156 to 168 (SVELGWLPTVGAD) the chain is on the periplasmic side. A helical membrane pass occupies residues 169 to 189 (SWQHYILPSLTLGAAVAAVMA). Topologically, residues 190-228 (RFTRASFVDVLSEDYMRTARAKGVSETWVVLKHGLRNAM) are cytoplasmic. A helical membrane pass occupies residues 229–249 (IPVVTMMGLQFGFLLGGSIVV). Over 250–277 (EKVFNWPGLGRLLVDSVEMRDYPVIQAE) the chain is Periplasmic. Residues 278–298 (ILLFSLEFILINLVVDVLYAA) traverse the membrane as a helical segment. Topologically, residues 299–306 (INPAIRYK) are cytoplasmic.

Belongs to the binding-protein-dependent transport system permease family. The complex is composed of two ATP-binding proteins (GsiA), two transmembrane proteins (GsiC and GsiD) and a solute-binding protein (GsiB).

It localises to the cell inner membrane. Its function is as follows. Part of the ABC transporter complex GsiABCD involved in glutathione import. Probably responsible for the translocation of the substrate across the membrane. This chain is Glutathione transport system permease protein GsiC, found in Escherichia coli O1:K1 / APEC.